The following is a 689-amino-acid chain: MTQQTFLVEIGTEELPPKALRSLAEAFAANFTAELDSANLEHGEVSWFAAPRRLALKVANLSAAQADREVEKRGPAIAQAFDAEGKPSKAAEGWARGCGITVDQAERLVTDKGEWLLYRAHVKGQSAQALLAGMVSNSLAKLPIPKLMRWGDSDVQFVRPVHTVTMLLGAELIPGTVLGIDSARTVRGHRFMGEAEFTIDNADQYPQILLERGKVIADYETRKAMIKRDAELAASTIGGKADLSESLLEEVASLVEWPVVLTAKFEEKFLAVPAEALVYTMKGDQKYFPVYDAAGKLLPNFIFVANIESKDPQQIISGNEKVVRPRLADAEFFFNTDRKKRLEDNLPRLETVLFQQQLGTLRDKTDRIQALAGWVAGQIGADVNHATRAGLLSKCDLMTNMVFEFTDTQGVMGMHYARHDGEAEDVAVALNEQYQPRFAGDALPESLVACSLAIADKMDTLAGIFGIGQHPKGDKDPFALRRAALGVLRIIVEKNLTLDLQTLTEEAVRLYGSKLTNAKVVDEVVEFMLGRFRAWYQEEGHAVDTIQAVLARRPTKPADFDARVKAVTHFRTLEAAAALAAANKRVSNILAKSTDTLNDRVHASVLKEAAEIQLATHLVVLRDKLEPYFAAGNYQDALVELADLREPVDAFFDNVMVMAEDEAVRVNRLTLLSKLRELFLQVADISVLQ.

Belongs to the class-II aminoacyl-tRNA synthetase family. Tetramer of two alpha and two beta subunits.

Its subcellular location is the cytoplasm. It catalyses the reaction tRNA(Gly) + glycine + ATP = glycyl-tRNA(Gly) + AMP + diphosphate. The sequence is that of Glycine--tRNA ligase beta subunit from Serratia proteamaculans (strain 568).